We begin with the raw amino-acid sequence, 382 residues long: uncharacterized protein (382 aa).

12 helical membrane passes run 14–34 (GLLL…LWLA), 45–65 (VVSS…GYVI), 79–99 (FIFA…SWLA), 102–122 (FVAG…LMCS), 131–151 (LLAA…LLVS), 157–177 (LMSV…PLLF), 204–224 (LGVN…GLMP), 235–255 (ASIG…QWPI), 270–290 (VQVF…AMAP), 291–311 (ALFI…AWAC), 325–345 (ALLL…AMLM), and 348–368 (FSDN…LLML).

Belongs to the major facilitator superfamily. YcaD (TC 2.A.1.26) family.

The protein resides in the cell inner membrane. This is an uncharacterized protein from Shigella sonnei (strain Ss046).